We begin with the raw amino-acid sequence, 540 residues long: MRRSDNHHPTVWGDHFLAYANLSGANEWEEKEHEDQKGEVRKMLVLSPSKSLQKLELINTIQLLGVSYHFEHEIEESLSEIYNGYEEWIGKSHDLHVVALSFRLLRQQGYYVSSDVFRKFTDDQGNYNKALVNDTHGLLSLYEAAQFRVHDEEILDEAINFTTTHLNLLLPKLSNSLSMQVSYALKYPINKTMARAATRKYISFYQEEKSSCDQLLINFAKLDFNILQKMYKREMCDITRWWKELDLVNELGFARDRVVELYFWSLGVYFEPQYKVARNILTKVLCFVSITDDIYDTYGTLHELTLLTNAIERRNIDAIENLTSYMKLFYTALLHFYDEVEKELEKENKSFRVNFAISEMKKLVRAYFQEAKWYHGNTVPKMEEEYMKNGIQSSASPTLATASWLGMGDEATKEAFEWISTEPPILVASSNIARLLNDIVSHEREIERGDVASSIECYMKEYGATKEEAYMEIRKIIENNWKDLNRGCLKPTTVPRVLLMPVLNLTRVAEFVYKDEDAYTFSKNNLKDVIFMVLDDPIEE.

Positions 292, 296, and 445 each coordinate Mg(2+). The short motif at 292-296 (DDIYD) is the DDXXD motif element.

This sequence belongs to the terpene synthase family. Tpsa subfamily. Mg(2+) serves as cofactor. Mn(2+) is required as a cofactor.

The catalysed reaction is (2E,6E)-farnesyl diphosphate = germacrene A + diphosphate. It participates in secondary metabolite biosynthesis; terpenoid biosynthesis. Sesquiterpene synthase involved in the biosynthesis of volatile compounds. Mediates the conversion of (2E,6E)-farnesyl diphosphate (FPP) into germacrene A. The chain is Sesquiterpene synthase 15b from Solanum habrochaites (Wild tomato).